A 127-amino-acid chain; its full sequence is Protein ApaG (127 aa).

An ApaG domain is found at 3–127 (EGKKYEIAVK…FILSVPRILH (125 aa)).

The polypeptide is Protein ApaG (Nitrosospira multiformis (strain ATCC 25196 / NCIMB 11849 / C 71)).